The sequence spans 309 residues: NAD kinase (309 aa).

Residue D89 is the Proton acceptor of the active site. Residues D89–G90, N163–E164, H174, R191, D193, and T204–S209 contribute to the NAD(+) site.

The protein belongs to the NAD kinase family. A divalent metal cation is required as a cofactor.

It is found in the cytoplasm. The catalysed reaction is NAD(+) + ATP = ADP + NADP(+) + H(+). Its function is as follows. Involved in the regulation of the intracellular balance of NAD and NADP, and is a key enzyme in the biosynthesis of NADP. Catalyzes specifically the phosphorylation on 2'-hydroxyl of the adenosine moiety of NAD to yield NADP. The protein is NAD kinase of Shewanella sp. (strain W3-18-1).